A 532-amino-acid chain; its full sequence is Transcriptional regulatory protein RtcR (532 aa).

Residues 186–424 (IATRNPHFNR…LSASVTRMAT (239 aa)) form the Sigma-54 factor interaction domain. Residues 215 to 222 (GPTGAGKS) and 281 to 290 (ANGGMLFLDE) each bind ATP. Positions 485-504 (KSLSAAGRQLFDVSRQGKAS) form a DNA-binding region, H-T-H motif.

Its function is as follows. Transcriptional repressor of the rtcAB genes. Interacts with sigma-54. This is Transcriptional regulatory protein RtcR (rtcR) from Escherichia coli (strain K12).